A 1033-amino-acid chain; its full sequence is MSEESFDDTNKAFENEKDIILEKIVKDENNLNNCSNMINMDDVENMKKELYVLHKKDEEIENNVDCFSGDKYNVENVINLKKKKKKDEDTDSSYYKTTLDEVYDTSDISTDEMLSNYSSSEDNNNIEMNIINDFYLKDDNTYCLEWNSDIINVLSEEIKEKEKLLEDENKDICNMKSRFLKLEKYVNIKKKKIINIKKNIEEKRKIEFDEKEIFKCLQIKNDFLKKENKKIELEREKNNKKIIETQNNITTCQKNIDDIKKELILKENELNDFINKIKIIQQEEYEIEKIKLSKDKEIQNVSYNLEKYNNEKIQQDKKYEQVKMNNMKFDIELKSIIQEYYDIKKDIKNISNKYICIMDMIKCRDKTIYKFEKDYTKTIHKEKQLQNKCLHKQNLINTQKDKNIILNNQIKKIQFDINKIRKELNDKQMSYDKTIIDRDHLNKEYEYEIVEIKEKLQEEKKSLENTLQHLNETYITMSTNYEESKNEYEKEQVNNIEKNDLIKSSEQILVQLQNKLQKLLDEIKSLDLEKFQLTQTLQVIKNDYITLEADVLGTQIKIKQIKSNIKKTEKELERQKEMLYKFDFQTQVLTKKINMISGISTFEKKKENQKKIILLEKELYKNEDIYNTLNNEMKRINIEIKNIKLYQNELQEQKMNYKNLYEKLQLEIKSLESTINNEIKEKENIMLIELNLKIELDKLKSTFSKHVDNLNICKKEKKENMNNAKLSEQDINAHMESLKVIIKNINDEIHKLNIQLYEKKNKSNNLQLKLNSIIICNQKNKDQKDICPNENQHIYYKMKIDQDIINLKEQLKKINEQIDKENIETKNFQRTLDDIIQTNKEFNDNIKSIDPQYKILLKKKNKLNKKWEQINDHINNLETNINDYNKKIKEGDSQLNNIQLQCENIEQKINKIKESNLKVENNINDLFIKIERASNQLKKNLAPTTNMMKLKNKQIKDDENNLSNNNNNNNNNNNNINVNVNVNCEPVPLEKHIFKQIQMESLKEKLSLLMECFKNNIDNVIMKEVFNLIETAE.

4 coiled-coil regions span residues Glu-212–Asn-326, Ile-405–Phe-582, Leu-615–Asn-771, and Lys-797–Asn-1019.

This is an uncharacterized protein from Plasmodium falciparum (isolate 3D7).